Here is a 193-residue protein sequence, read N- to C-terminus: ECF RNA polymerase sigma factor SigK (193 aa).

The tract at residues 35 to 101 (LYDRTRSRVY…RRAVDRVRSE (67 aa)) is sigma-70 factor domain-2. Residues 59–62 (ETTQ) carry the Polymerase core binding motif. The tract at residues 140–187 (MGSLSDLQREAIQLAYYEGLTYVQVSERLSANLATIKSRMRGGIRGLK) is sigma-70 factor domain-4. The segment at residues 161-180 (YVQVSERLSANLATIKSRMR) is a DNA-binding region (H-T-H motif).

This sequence belongs to the sigma-70 factor family. ECF subfamily. Interacts transiently with the RNA polymerase catalytic core formed by RpoA, RpoB, RpoC and RpoZ (2 alpha, 1 beta, 1 beta' and 1 omega subunit) to form the RNA polymerase holoenzyme that can initiate transcription. Interacts (via sigma-70 factor domain 4) with anti-sigma-K factor RskA.

Sigma factors are initiation factors that promote the attachment of RNA polymerase to specific initiation sites and are then released. Extracytoplasmic function (ECF) sigma factors are held in an inactive form by an anti-sigma factor until released by regulated intramembrane proteolysis. The protein is ECF RNA polymerase sigma factor SigK (sigK) of Mycobacterium sp. (strain KMS).